A 353-amino-acid chain; its full sequence is Dihydroorotate dehydrogenase (quinone) (353 aa).

FMN is bound by residues 67-71 and threonine 91; that span reads AGFDK. Residue lysine 71 participates in substrate binding. 116–120 is a binding site for substrate; the sequence is NRMGF. FMN-binding residues include asparagine 144 and asparagine 177. Residue asparagine 177 coordinates substrate. Residue serine 180 is the Nucleophile of the active site. Residue asparagine 182 coordinates substrate. Positions 215 and 243 each coordinate FMN. 244-245 provides a ligand contact to substrate; that stretch reads NT. Residues glycine 264, glycine 293, and 314-315 each bind FMN; that span reads YT.

This sequence belongs to the dihydroorotate dehydrogenase family. Type 2 subfamily. Monomer. Requires FMN as cofactor.

The protein resides in the cell membrane. The catalysed reaction is (S)-dihydroorotate + a quinone = orotate + a quinol. It functions in the pathway pyrimidine metabolism; UMP biosynthesis via de novo pathway; orotate from (S)-dihydroorotate (quinone route): step 1/1. Functionally, catalyzes the conversion of dihydroorotate to orotate with quinone as electron acceptor. The polypeptide is Dihydroorotate dehydrogenase (quinone) (Gloeobacter violaceus (strain ATCC 29082 / PCC 7421)).